The sequence spans 150 residues: MTLIYVPTTLNLIDSFNYSESIYKWGDYFFRHLESRDFYFSNFGFISLFLLLFVIPTITLTTLGCFLFSYLRFTDINKIKIQIYSLLTVFIFIDVFGLVVSVLFGYLLPLAFDSLPFSVNLTREVFLSLAMIVIFANSVIFTLRQKRNID.

3 consecutive transmembrane segments (helical) span residues L48–F68, V89–P109, and R123–L143.

The protein to M.pneumoniae MPN_085 central region.

It is found in the cell membrane. This is an uncharacterized protein from Mycoplasma pneumoniae (strain ATCC 29342 / M129 / Subtype 1) (Mycoplasmoides pneumoniae).